Here is a 496-residue protein sequence, read N- to C-terminus: Probable cytosol aminopeptidase (496 aa).

Mn(2+)-binding residues include Lys267 and Asp272. Residue Lys279 is part of the active site. Asp290, Asp349, and Glu351 together coordinate Mn(2+). Residue Arg353 is part of the active site.

This sequence belongs to the peptidase M17 family. The cofactor is Mn(2+).

It localises to the cytoplasm. It carries out the reaction Release of an N-terminal amino acid, Xaa-|-Yaa-, in which Xaa is preferably Leu, but may be other amino acids including Pro although not Arg or Lys, and Yaa may be Pro. Amino acid amides and methyl esters are also readily hydrolyzed, but rates on arylamides are exceedingly low.. The enzyme catalyses Release of an N-terminal amino acid, preferentially leucine, but not glutamic or aspartic acids.. Its function is as follows. Presumably involved in the processing and regular turnover of intracellular proteins. Catalyzes the removal of unsubstituted N-terminal amino acids from various peptides. This is Probable cytosol aminopeptidase from Methylobacillus flagellatus (strain ATCC 51484 / DSM 6875 / VKM B-1610 / KT).